The sequence spans 423 residues: CinA-like protein (423 aa).

The protein belongs to the CinA family.

In Chlorobaculum tepidum (strain ATCC 49652 / DSM 12025 / NBRC 103806 / TLS) (Chlorobium tepidum), this protein is CinA-like protein.